Here is a 542-residue protein sequence, read N- to C-terminus: Valine N-monooxygenase 1 (542 aa).

Residues 1–21 (MAMNVSTTIGLLNATSFASSS) lie on the Cytoplasmic side of the membrane. A helical; Signal-anchor for type II membrane protein transmembrane segment spans residues 22–42 (SINTVKILFVTLFISIVSTIV). Residues 43 to 542 (KLQKSAANKE…LAPHLYPTSP (500 aa)) lie on the Lumenal side of the membrane. Asn-278 carries N-linked (GlcNAc...) asparagine glycosylation. A heme-binding site is contributed by Cys-478. N-linked (GlcNAc...) asparagine glycosylation occurs at Asn-506.

It belongs to the cytochrome P450 family. Heme is required as a cofactor. Expressed in the epidermis, the next two cortex cell layers, the endodermis and the pericycle of leaf petioles. Strong expression around the laticifers among the phloem cells and in parenchymatic cells between the protoxylem and the metaxylem cells. In the leaves, preferentially expressed in the mesophyll cells adjacent to the epidermis.

It is found in the microsome membrane. The enzyme catalyses L-valine + 2 reduced [NADPH--hemoprotein reductase] + 2 O2 = (E)-2-methylpropanal oxime + 2 oxidized [NADPH--hemoprotein reductase] + CO2 + 3 H2O + 2 H(+). It catalyses the reaction L-valine + reduced [NADPH--hemoprotein reductase] + O2 = N-hydroxy-L-valine + oxidized [NADPH--hemoprotein reductase] + H2O + 2 H(+). It carries out the reaction N-hydroxy-L-valine + reduced [NADPH--hemoprotein reductase] + O2 = N,N-dihydroxy-L-valine + oxidized [NADPH--hemoprotein reductase] + H2O + H(+). The catalysed reaction is L-isoleucine + 2 reduced [NADPH--hemoprotein reductase] + 2 O2 = (1E,2S)-2-methylbutanal oxime + 2 oxidized [NADPH--hemoprotein reductase] + CO2 + 3 H2O + 2 H(+). The enzyme catalyses L-isoleucine + reduced [NADPH--hemoprotein reductase] + O2 = N-hydroxy-L-isoleucine + oxidized [NADPH--hemoprotein reductase] + H2O + 2 H(+). It catalyses the reaction N-hydroxy-L-isoleucine + reduced [NADPH--hemoprotein reductase] + O2 = N,N-dihydroxy-L-isoleucine + oxidized [NADPH--hemoprotein reductase] + H2O + H(+). Its pathway is secondary metabolite biosynthesis. Its activity is regulated as follows. Inhibited by tetcyclasis but not by 1-aminobenzotriazole (ABT). Involved in the biosynthesis of the cyanogenic glucosides linamarin and lotaustralin. Can use L-valine or L-isoleucine as substrate, but not L-leucine, L-phenylalanine, L-tyrosine, D-valine or D-isoleucine. Catalyzes multi-step reactions starting with two successive N-hydroxylations using L-valine and L-isoleucine as substrates leading to the formation of N,N-dihydroxy-L-valine and N,N-dihydroxy-L-isoleucine, respectively; following spontaneous reactions lead to the production of (E)-2-methylpropanal oxime and (1E,2S)-2-methylbutanal oxime, respectively. The chain is Valine N-monooxygenase 1 from Manihot esculenta (Cassava).